The primary structure comprises 281 residues: 2-dehydro-3-deoxyphosphooctonate aldolase (281 aa).

Belongs to the KdsA family.

It is found in the cytoplasm. It catalyses the reaction D-arabinose 5-phosphate + phosphoenolpyruvate + H2O = 3-deoxy-alpha-D-manno-2-octulosonate-8-phosphate + phosphate. It participates in carbohydrate biosynthesis; 3-deoxy-D-manno-octulosonate biosynthesis; 3-deoxy-D-manno-octulosonate from D-ribulose 5-phosphate: step 2/3. It functions in the pathway bacterial outer membrane biogenesis; lipopolysaccharide biosynthesis. The protein is 2-dehydro-3-deoxyphosphooctonate aldolase of Hahella chejuensis (strain KCTC 2396).